The primary structure comprises 282 residues: Protein-export membrane protein SecF (282 aa).

6 consecutive transmembrane segments (helical) span residues 9 to 29 (IAIP…KGIP), 120 to 140 (EGFK…YLYF), 149 to 169 (IILS…LLGI), 174 to 194 (ATIA…ILLT), 214 to 234 (KTGL…LIVV), and 236 to 256 (LFIP…LALI).

It belongs to the SecD/SecF family. SecF subfamily. In terms of assembly, part of the protein translocation apparatus. Forms a complex with SecD.

Its subcellular location is the cell membrane. Functionally, involved in protein export. This Methanocaldococcus jannaschii (strain ATCC 43067 / DSM 2661 / JAL-1 / JCM 10045 / NBRC 100440) (Methanococcus jannaschii) protein is Protein-export membrane protein SecF.